Here is a 355-residue protein sequence, read N- to C-terminus: Protein ECERIFERUM 16 (355 aa).

2 disordered regions span residues 1-60 and 296-315; these read MDSK…LPSN and HSST…KIHM. Residues 7–28 are compositionally biased toward basic residues; the sequence is AKSKRAHTLHHSKKSHSVHKPK. Polar residues-rich tracts occupy residues 41-53 and 296-310; these read QGNQ…QSRR and HSST…NPSD.

Interacts with RST1. Expressed in taproots, lateral roots, root tips, leaf veins, cauline leaves, inflorescences, flowers, and siliques.

Its subcellular location is the cytoplasm. The protein resides in the cytosol. It is found in the endoplasmic reticulum. Its function is as follows. Together with RST1, acts as a cofactor of the cytoplasmic exosome and connects the cytosolic RNA exosome to the SKI complex. Acts as a post-transcriptional gene silencing (PTGS) suppressor. CER16/RIPR can, like RST1 suppress the production of small interfering RNAs (siRNAs) from the CER3 locus, which is involved in cuticule membrane and wax production, and in the typhine and sporopollenin biosynthesis of pollen. This Arabidopsis thaliana (Mouse-ear cress) protein is Protein ECERIFERUM 16.